A 464-amino-acid polypeptide reads, in one-letter code: UDP-N-acetylmuramate--L-alanine ligase (464 aa).

Residue 112–118 (GTHGKTT) participates in ATP binding.

It belongs to the MurCDEF family.

The protein localises to the cytoplasm. It catalyses the reaction UDP-N-acetyl-alpha-D-muramate + L-alanine + ATP = UDP-N-acetyl-alpha-D-muramoyl-L-alanine + ADP + phosphate + H(+). The protein operates within cell wall biogenesis; peptidoglycan biosynthesis. Its function is as follows. Cell wall formation. This is UDP-N-acetylmuramate--L-alanine ligase from Chromobacterium violaceum (strain ATCC 12472 / DSM 30191 / JCM 1249 / CCUG 213 / NBRC 12614 / NCIMB 9131 / NCTC 9757 / MK).